The following is a 369-amino-acid chain: Queuine tRNA-ribosyltransferase accessory subunit 2 (369 aa).

The tract at residues 263 to 282 (SSKLTEVEEENGNDSSNDQD) is disordered. Positions 308, 310, 313, and 339 each coordinate Zn(2+).

The protein belongs to the queuine tRNA-ribosyltransferase family. QTRT2 subfamily. Heterodimer of a catalytic subunit and an accessory subunit. The cofactor is Zn(2+).

It localises to the cytoplasm. Functionally, non-catalytic subunit of the queuine tRNA-ribosyltransferase (TGT) that catalyzes the base-exchange of a guanine (G) residue with queuine (Q) at position 34 (anticodon wobble position) in tRNAs with GU(N) anticodons (tRNA-Asp, -Asn, -His and -Tyr), resulting in the hypermodified nucleoside queuosine (7-(((4,5-cis-dihydroxy-2-cyclopenten-1-yl)amino)methyl)-7-deazaguanosine). The protein is Queuine tRNA-ribosyltransferase accessory subunit 2 of Trichoplax adhaerens (Trichoplax reptans).